The primary structure comprises 144 residues: Large ribosomal subunit protein uL15 (144 aa).

The disordered stretch occupies residues 1 to 48 (MIKLEYLQDPSPRKRRTKLLGRGPSSGHGKTSGRGHKGDGSRSGYKRR).

The protein belongs to the universal ribosomal protein uL15 family. As to quaternary structure, part of the 50S ribosomal subunit.

Its function is as follows. Binds to the 23S rRNA. The polypeptide is Large ribosomal subunit protein uL15 (Chlamydia muridarum (strain MoPn / Nigg)).